The chain runs to 147 residues: Protein SOB FIVE-LIKE 2 (147 aa).

The SOFL-A signature appears at 18 to 23 (SGWTMY). The interval 32-147 (HHSEVVYEEE…ASRVKVSKTK (116 aa)) is disordered. Acidic residues predominate over residues 37 to 77 (VYEEEDDGFSVKEVDDDGDGDEDDDDDDDDDSSNNESDDSM). The SOFL-B signature appears at 76–85 (SMTSDASSWP). Polar residues predominate over residues 78-93 (TSDASSWPSTHQPPRS). Residues 96–106 (NHAAAKNSNAK) show a composition bias toward low complexity. Over residues 114-131 (NRVRDRFSDEGEESELKA) the composition is skewed to basic and acidic residues.

The protein belongs to the SOFL plant protein family. In terms of tissue distribution, predominantly expressed in the vascular tissues of seedlings, developing leaves, flowers and siliques, but barely detectable in roots and stems.

It is found in the cytoplasm. The protein localises to the nucleus. Functionally, involved in cytokinin-mediated development. Together with SOFL2, triggers the endogenous content of specific bioactive cytokinins derived from the biosynthetic intermediates trans-zeatin riboside monophosphate (tZRMP) and N(6)-(Delta(2)-isopentenyl)adenosine monophosphate (iPRMP) such as N-glucosides trans-zeatin 7-glucoside (tZ7G), cis-zeatin 7-glucoside (cZ7G) and N(6)-(Delta(2)-isopentenyl)adenine 7-glucoside (iP7G). This is Protein SOB FIVE-LIKE 2 from Arabidopsis thaliana (Mouse-ear cress).